Reading from the N-terminus, the 109-residue chain is Large ribosomal subunit protein uL24 (109 aa).

This sequence belongs to the universal ribosomal protein uL24 family. As to quaternary structure, part of the 50S ribosomal subunit.

Functionally, one of two assembly initiator proteins, it binds directly to the 5'-end of the 23S rRNA, where it nucleates assembly of the 50S subunit. Its function is as follows. One of the proteins that surrounds the polypeptide exit tunnel on the outside of the subunit. In Mesoplasma florum (strain ATCC 33453 / NBRC 100688 / NCTC 11704 / L1) (Acholeplasma florum), this protein is Large ribosomal subunit protein uL24.